The chain runs to 311 residues: GTP cyclohydrolase MptA (311 aa).

This sequence belongs to the GTP cyclohydrolase IV family. Homodimer. Fe(2+) serves as cofactor.

It catalyses the reaction GTP + H2O = 7,8-dihydroneopterin 2',3'-cyclic phosphate + formate + diphosphate + H(+). It functions in the pathway cofactor biosynthesis; 5,6,7,8-tetrahydromethanopterin biosynthesis. Functionally, converts GTP to 7,8-dihydro-D-neopterin 2',3'-cyclic phosphate, the first intermediate in the biosynthesis of coenzyme methanopterin. This is GTP cyclohydrolase MptA from Methanocorpusculum labreanum (strain ATCC 43576 / DSM 4855 / Z).